The following is a 154-amino-acid chain: Transcriptional repressor NrdR (154 aa).

A zinc finger spans residues 3–34 (CPFCGANDTKVIDSRLVAEGEQVRRRRECVAC). Residues 49 to 139 (PRLIKQDGTR…VYRRFQDLDE (91 aa)) form the ATP-cone domain.

It belongs to the NrdR family. Zn(2+) serves as cofactor.

Negatively regulates transcription of bacterial ribonucleotide reductase nrd genes and operons by binding to NrdR-boxes. The chain is Transcriptional repressor NrdR from Pseudomonas putida (strain W619).